We begin with the raw amino-acid sequence, 394 residues long: GDNF family receptor alpha-like (394 aa).

A signal peptide spans 1 to 19 (MLVFIFLAVRLSSENESSS). Topologically, residues 20–350 (QTNDCAYFMR…LTGFNSPFSG (331 aa)) are extracellular. N-linked (GlcNAc...) asparagine glycans are attached at residues N65, N101, and N115. Disulfide bonds link C132-C190, C139-C145, C156-C168, C163-C211, C192-C199, C221-C292, C228-C234, C245-C276, C253-C259, C270-C317, and C294-C305. The segment at 150 to 229 (ALYLKACTAN…TCLSVIHTCR (80 aa)) is required for interaction with GDF15. The chain crosses the membrane as a helical span at residues 351 to 371 (ELIYVVVCMVVTSGILSLVML). Residues 372–394 (KLRIPSKKRDPAPIEIAGAVIIQ) lie on the Cytoplasmic side of the membrane.

The protein belongs to the GDNFR family. As to quaternary structure, interacts (via the extracellular domain) with GDF15 and RET; receptor of GDF15, mediates cellular signaling through interaction with RET after GDF15-binding. Interaction with RET requires previous GDF15-binding. In terms of processing, cleaved and inactivated by MMP14, inhibiting the GDF15-GFRAL aversive response. In terms of tissue distribution, expressed in the brainstem, restricted to cells in the area postrema and the immediately adjacent region of the nucleus tractus solitarius. Detected at low levels in testis.

Its subcellular location is the cell membrane. In terms of biological role, brainstem-restricted receptor for GDF15 hormone, which triggers an aversive response, characterized by nausea, vomiting, and/or loss of appetite in response to various stresses. The aversive response is both required to reduce continuing exposure to those stresses at the time of exposure and to promote avoidance behavior in the future. The GDF15-GFRAL aversive response is triggered by stresses, such as anticancer drugs (camptothecin or cisplatin), cancers or drugs such as metformin. Upon interaction with its ligand, GDF15, mediates the GDF15-induced autophosphorylation and activation of the RET tyrosine kinase receptor, leading to activation of MAPK- and AKT- signaling pathways. Ligand-binding activates GFRAL-expressing neurons localized in the area postrema and nucleus tractus solitarius of the brainstem. The GDF15-GFRAL signal induces expression of genes involved in metabolism, such as lipid metabolism in adipose tissues. The polypeptide is GDNF family receptor alpha-like (Rattus norvegicus (Rat)).